The sequence spans 412 residues: Multifunctional CCA protein (412 aa).

ATP-binding residues include Gly8 and Arg11. Residues Gly8 and Arg11 each coordinate CTP. Mg(2+) contacts are provided by Asp21 and Asp23. Arg91, Arg137, and Arg140 together coordinate ATP. CTP contacts are provided by Arg91, Arg137, and Arg140. One can recognise an HD domain in the interval 228–329 (TGIHTLMTLS…VKLFDSIDAW (102 aa)).

It belongs to the tRNA nucleotidyltransferase/poly(A) polymerase family. Bacterial CCA-adding enzyme type 1 subfamily. In terms of assembly, monomer. Can also form homodimers and oligomers. Mg(2+) serves as cofactor. The cofactor is Ni(2+).

It catalyses the reaction a tRNA precursor + 2 CTP + ATP = a tRNA with a 3' CCA end + 3 diphosphate. The catalysed reaction is a tRNA with a 3' CCA end + 2 CTP + ATP = a tRNA with a 3' CCACCA end + 3 diphosphate. In terms of biological role, catalyzes the addition and repair of the essential 3'-terminal CCA sequence in tRNAs without using a nucleic acid template. Adds these three nucleotides in the order of C, C, and A to the tRNA nucleotide-73, using CTP and ATP as substrates and producing inorganic pyrophosphate. tRNA 3'-terminal CCA addition is required both for tRNA processing and repair. Also involved in tRNA surveillance by mediating tandem CCA addition to generate a CCACCA at the 3' terminus of unstable tRNAs. While stable tRNAs receive only 3'-terminal CCA, unstable tRNAs are marked with CCACCA and rapidly degraded. In Escherichia coli (strain K12 / MC4100 / BW2952), this protein is Multifunctional CCA protein.